Reading from the N-terminus, the 63-residue chain is MGAGTAPKGKRNRTPTHIRCRRCGRRAFNVKKGYCAACGFGRSRRMRKYSWSHKWRKKRNLSY.

The Zn(2+) site is built by Cys-20, Cys-23, Cys-35, and Cys-38. The C4-type zinc-finger motif lies at 20–38 (CRRCGRRAFNVKKGYCAAC).

This sequence belongs to the eukaryotic ribosomal protein eL37 family. As to quaternary structure, part of the 50S ribosomal subunit. The cofactor is Zn(2+).

In terms of biological role, binds to the 23S rRNA. This Thermococcus kodakarensis (strain ATCC BAA-918 / JCM 12380 / KOD1) (Pyrococcus kodakaraensis (strain KOD1)) protein is Large ribosomal subunit protein eL37.